The primary structure comprises 279 residues: Shikimate dehydrogenase (NADP(+)) (279 aa).

Shikimate contacts are provided by residues 14–16 and threonine 62; that span reads SLS. The Proton acceptor role is filled by lysine 66. Asparagine 87 and aspartate 103 together coordinate shikimate. Residues 127-131, 151-156, and methionine 215 contribute to the NADP(+) site; these read GAGGA and NRTKAK. Tyrosine 217 contacts shikimate. An NADP(+)-binding site is contributed by glycine 239.

This sequence belongs to the shikimate dehydrogenase family. As to quaternary structure, homodimer.

It carries out the reaction shikimate + NADP(+) = 3-dehydroshikimate + NADPH + H(+). It functions in the pathway metabolic intermediate biosynthesis; chorismate biosynthesis; chorismate from D-erythrose 4-phosphate and phosphoenolpyruvate: step 4/7. Its function is as follows. Involved in the biosynthesis of the chorismate, which leads to the biosynthesis of aromatic amino acids. Catalyzes the reversible NADPH linked reduction of 3-dehydroshikimate (DHSA) to yield shikimate (SA). The sequence is that of Shikimate dehydrogenase (NADP(+)) from Alteromonas mediterranea (strain DSM 17117 / CIP 110805 / LMG 28347 / Deep ecotype).